The sequence spans 277 residues: Bis(5'-nucleosyl)-tetraphosphatase, symmetrical (277 aa).

It belongs to the Ap4A hydrolase family.

It carries out the reaction P(1),P(4)-bis(5'-adenosyl) tetraphosphate + H2O = 2 ADP + 2 H(+). Hydrolyzes diadenosine 5',5'''-P1,P4-tetraphosphate to yield ADP. This Methylobacillus flagellatus (strain ATCC 51484 / DSM 6875 / VKM B-1610 / KT) protein is Bis(5'-nucleosyl)-tetraphosphatase, symmetrical.